We begin with the raw amino-acid sequence, 283 residues long: MLRIAVPNKGMLSEPAWNMLAEAGYRLRTNPRQLVVQDPDNGIELFYLRPLDIAVYVGRGAIDVGITGQDLLKNSGTAALEHMPLGFGASTFRFAAPNESPITTLEDVQGKRVATTFDKLVHDYLVEHGIQAETIHLDGAVESSVQLGVADLIADVVSTGTTLRNAGLRVFAEPLMHSEACLIRSPRLNEQDPRLAVLTRRLQGVLTAHQYVLMDYDIPISKVAAAVAVTPGFESPTISPLHDKQWNAVRVMVPKAKVNQLMDDLYEVGARGIIVTALQASRM.

Belongs to the ATP phosphoribosyltransferase family. Long subfamily. Mg(2+) serves as cofactor.

The protein resides in the cytoplasm. The enzyme catalyses 1-(5-phospho-beta-D-ribosyl)-ATP + diphosphate = 5-phospho-alpha-D-ribose 1-diphosphate + ATP. The protein operates within amino-acid biosynthesis; L-histidine biosynthesis; L-histidine from 5-phospho-alpha-D-ribose 1-diphosphate: step 1/9. With respect to regulation, feedback inhibited by histidine. Its function is as follows. Catalyzes the condensation of ATP and 5-phosphoribose 1-diphosphate to form N'-(5'-phosphoribosyl)-ATP (PR-ATP). Has a crucial role in the pathway because the rate of histidine biosynthesis seems to be controlled primarily by regulation of HisG enzymatic activity. The sequence is that of ATP phosphoribosyltransferase from Bifidobacterium longum (strain DJO10A).